A 452-amino-acid polypeptide reads, in one-letter code: Flavin-containing monooxygenase FMO GS-OX-like 4 (452 aa).

An FAD-binding site is contributed by 17–22 (GAGAAG). 217-222 (GNSASA) serves as a coordination point for NADP(+).

This sequence belongs to the FMO family. Requires FAD as cofactor.

Its function is as follows. Catalyzes the conversion of methylthioalkyl glucosinolates of any chain length into methylsulfinylalkyl glucosinolates. This chain is Flavin-containing monooxygenase FMO GS-OX-like 4, found in Arabidopsis thaliana (Mouse-ear cress).